The primary structure comprises 481 residues: Cysteine--tRNA ligase (481 aa).

C29 lines the Zn(2+) pocket. Positions 31-41 (PTVYDYSHLGH) match the 'HIGH' region motif. The Zn(2+) site is built by C210, H235, and E239. Residues 272–276 (KMSKS) carry the 'KMSKS' region motif. Residue K275 coordinates ATP.

Belongs to the class-I aminoacyl-tRNA synthetase family. Monomer. It depends on Zn(2+) as a cofactor.

It is found in the cytoplasm. It catalyses the reaction tRNA(Cys) + L-cysteine + ATP = L-cysteinyl-tRNA(Cys) + AMP + diphosphate. This Anaeromyxobacter dehalogenans (strain 2CP-1 / ATCC BAA-258) protein is Cysteine--tRNA ligase.